The primary structure comprises 541 residues: Threonine--tRNA ligase catalytic subunit (541 aa).

The interval Asp-135–Pro-429 is catalytic. 3 residues coordinate Zn(2+): Cys-227, His-278, and His-406.

The protein belongs to the class-II aminoacyl-tRNA synthetase family. In terms of assembly, homodimer. Probably interacts with its editing subunit. It depends on Zn(2+) as a cofactor.

It is found in the cytoplasm. It carries out the reaction tRNA(Thr) + L-threonine + ATP = L-threonyl-tRNA(Thr) + AMP + diphosphate + H(+). Its function is as follows. Catalyzes the attachment of threonine to tRNA(Thr) in a two-step reaction: L-threonine is first activated by ATP to form Thr-AMP and then transferred to the acceptor end of tRNA(Thr). Also activates L-serine and transfers it to tRNA(Thr) but cannot deacylate incorrectly charged amino acid; unlike most archaea the editing function is found in a freestanding protein. This chain is Threonine--tRNA ligase catalytic subunit, found in Metallosphaera sedula (strain ATCC 51363 / DSM 5348 / JCM 9185 / NBRC 15509 / TH2).